Reading from the N-terminus, the 328-residue chain is MEASYFIETIIKIVVIVLIFSALAGIGTYFERKVLAFMQRRLGPVNVGPFGLLQVAADGIKLFTKEDIVPTNVVGRIFKIAPVITAATAFMAAAAIPFLPSFTIFGYEVHPIVSDINIGILYILGIMGVGLYGPLLGGMASANKFSLISAARGAAVFISYEVVTGLSILAPIMMVGSLSLIDFNEYQSAGITSWIVWTQPVAFILFWIAAFAETGRTPFHLIANDHEIIDGFGTEYSGMRWGLFFIGEYANMFFISFVISLLFLGGYGDGSLLGALGLLAKVAFFFFFFLWTRAAWPDIRPDQLMWLCWKVLMPIALINIVITAIVMM.

8 helical membrane passes run 10–30, 80–100, 118–138, 155–175, 191–211, 243–263, 272–292, and 306–326; these read IIKIVVIVLIFSALAGIGTYF, IAPVITAATAFMAAAAIPFLP, IGILYILGIMGVGLYGPLLGG, AVFISYEVVTGLSILAPIMMV, ITSWIVWTQPVAFILFWIAAF, LFFIGEYANMFFISFVISLLF, LLGALGLLAKVAFFFFFFLWT, and WLCWKVLMPIALINIVITAIV.

This sequence belongs to the complex I subunit 1 family. NDH-1 is composed of 14 different subunits. Subunits NuoA, H, J, K, L, M, N constitute the membrane sector of the complex.

It localises to the cell inner membrane. The catalysed reaction is a quinone + NADH + 5 H(+)(in) = a quinol + NAD(+) + 4 H(+)(out). In terms of biological role, NDH-1 shuttles electrons from NADH, via FMN and iron-sulfur (Fe-S) centers, to quinones in the respiratory chain. The immediate electron acceptor for the enzyme in this species is believed to be ubiquinone. Couples the redox reaction to proton translocation (for every two electrons transferred, four hydrogen ions are translocated across the cytoplasmic membrane), and thus conserves the redox energy in a proton gradient. This subunit may bind ubiquinone. The protein is NADH-quinone oxidoreductase subunit H of Sulfurimonas denitrificans (strain ATCC 33889 / DSM 1251) (Thiomicrospira denitrificans (strain ATCC 33889 / DSM 1251)).